Reading from the N-terminus, the 259-residue chain is MQIALLSEDPNRQSELEAIATRWGLEHDEDNVFALVLTDKQLELRKRDEPKLGAIFVDLVSGAVAHRRKFGGGKGQSIAKAVGLNKGATPIVLDGTAGLGRDAFVLASLGCKVQMVERHPVVAALLDDGLARAKQDAEIGVWVAERMSLLHASSHDALEQLMAQDDFVQPDVVYLDPMYPHPVNKKKSALVKKEMRVFQSLVGADNDADALLAPALSMATKRVVVKRPDYAEWLDNQKPSMAIETKKNRFDVYVNAAMA.

S-adenosyl-L-methionine contacts are provided by residues 101–102, 117–118, 153–154, and aspartate 176; these read RD, ER, and SS.

This sequence belongs to the methyltransferase superfamily. RsmJ family.

It is found in the cytoplasm. It catalyses the reaction guanosine(1516) in 16S rRNA + S-adenosyl-L-methionine = N(2)-methylguanosine(1516) in 16S rRNA + S-adenosyl-L-homocysteine + H(+). Its function is as follows. Specifically methylates the guanosine in position 1516 of 16S rRNA. The sequence is that of Ribosomal RNA small subunit methyltransferase J from Aliivibrio fischeri (strain ATCC 700601 / ES114) (Vibrio fischeri).